A 205-amino-acid chain; its full sequence is Meiotic nuclear division protein 1 homolog (205 aa).

Residues 79–147 (LHARKRKLET…CADLEKYKEC (69 aa)) adopt a coiled-coil conformation.

This sequence belongs to the MND1 family.

The protein localises to the nucleus. Functionally, required for proper homologous chromosome pairing and efficient cross-over and intragenic recombination during meiosis. Stimulates both dmc1- and rad51-mediated homologous strand assimilation, which is required for the resolution of meiotic double-strand breaks. This is Meiotic nuclear division protein 1 homolog from Xenopus laevis (African clawed frog).